The primary structure comprises 361 residues: Myb/SANT-like DNA-binding domain-containing protein 7 (361 aa).

The Myb-like domain maps to 11 to 70; that stretch reads RWSRQETRTLLSILGEAEYIQRLQTVHHNADVYQAVSKRMQQEGFRRTERQCRSKFKVLK. Disordered regions lie at residues 174–198 and 217–272; these read TSDLEDSWDESSGAGCSQGTPSYSS and RLGV…ARRR. Polar residues-rich tracts occupy residues 187-198 and 226-249; these read AGCSQGTPSYSS and PCTSTNRSTPGVASTPQTPVSSSR.

This is Myb/SANT-like DNA-binding domain-containing protein 7 from Homo sapiens (Human).